The primary structure comprises 557 residues: (-)-germacrene D synthase (557 aa).

Residues aspartate 310, aspartate 314, and glutamate 462 each contribute to the Mg(2+) site. The DDXXD motif motif lies at 310 to 314 (DDIYD).

This sequence belongs to the terpene synthase family. Tpsa subfamily. Mg(2+) is required as a cofactor. In terms of tissue distribution, expressed in flowers. Detected in stems, young leaves and tendrils.

The protein resides in the cytoplasm. The catalysed reaction is (2E,6E)-farnesyl diphosphate + H2O = (1E,4S,5E,7R)-germacra-1(10),5-dien-11-ol + diphosphate. The enzyme catalyses (2E,6E)-farnesyl diphosphate = (-)-germacrene D + diphosphate. It functions in the pathway secondary metabolite biosynthesis; terpenoid biosynthesis. In terms of biological role, involved in the biosynthesis of germacrene D. Can use farnesyl diphosphate as substrate, but not geranyl diphosphate or geranylgeranyl diphosphate. Produces mainly (-)-germacrene D along with gamma-cadinene. The sequence is that of (-)-germacrene D synthase from Vitis vinifera (Grape).